We begin with the raw amino-acid sequence, 923 residues long: Progesterone receptor (923 aa).

Residues 1–11 (MTELQAKDPRT) show a composition bias toward basic and acidic residues. Residues 1–49 (MTELQAKDPRTLHTSGAAPSPTHVGSPLLARLDPDPFQGSQHSDASSVV) form a disordered region. An AF3; mediates transcriptional activation (in isoform B) region spans residues 1 to 164 (MTELQAKDPR…PATKGLLSPL (164 aa)). Positions 1 to 556 (MTELQAKDPR…YGFDSLPQKI (556 aa)) are modulating, Pro-Rich. A Glycyl lysine isopeptide (Lys-Gly) (interchain with G-Cter in SUMO) cross-link involves residue Lys7. Ser20 carries the post-translational modification Phosphoserine. The span at 38–49 (QGSQHSDASSVV) shows a compositional bias: polar residues. The short motif at 56-60 (LDRLL) is the LXXL motif 1 element. Residues 67–111 (AQELPDEKTQNQQSLSDVEGAFSGVEASRRRSRNPRAPEKDSRLL) form a disordered region. Ser82 carries the post-translational modification Phosphoserine. An LXXL motif 2 motif is present at residues 115 to 119 (LDTLL). Ser130 and Ser162 each carry phosphoserine. Residues 152–239 (RSVPATKGLL…EGSAGPLLKS (88 aa)) form a disordered region. Residues 165–304 (MSRPESKAGD…LATTVVDFIH (140 aa)) are mediates transcriptional transrepression (in isoform A). Positions 184-188 (VLPKA) match the Nuclear localization signal motif. 2 positions are modified to phosphoserine: Ser190 and Ser213. Ser293 bears the Phosphoserine; by MAPK1 mark. The segment at 333–371 (AAQVPFAPPRGSPSAPSPPVPCGDFPDCTYPPEGDPKED) is disordered. Positions 338–353 (FAPPRGSPSAPSPPVP) are enriched in pro residues. Ser344 carries the post-translational modification Phosphoserine; by MAPK. Lys387 is covalently cross-linked (Glycyl lysine isopeptide (Lys-Gly) (interchain with G-Cter in SUMO); alternate). A Glycyl lysine isopeptide (Lys-Gly) (interchain with G-Cter in ubiquitin); alternate cross-link involves residue Lys387. Ser399 bears the Phosphoserine; by CDK2 mark. Residues 412 to 435 (TFPDFPLPPRPPRAPPSRPGEAAV) form a disordered region. A compositionally biased stretch (pro residues) spans 416–429 (FPLPPRPPRAPPSR). Residues 450–536 (SALECILYKA…VYPPYLNYLR (87 aa)) are AF1; mediates transcriptional activation. Lys521 participates in a covalent cross-link: Glycyl lysine isopeptide (Lys-Gly) (interchain with G-Cter in SUMO). 2 consecutive NR C4-type zinc fingers follow at residues 557–577 (CLIC…CGSC) and 593–617 (CAGR…LRKC). Residues 557–629 (CLICGDEASG…AGMVLGGRKF (73 aa)) constitute a DNA-binding region (nuclear receptor). Ser666 is modified (phosphoserine). Residues 669 to 903 (QEIQLVPPLI…EFPEMMSEVI (235 aa)) enclose the NR LBD domain. Residues 677–923 (LINLLMSIEP…MVKPLLFHKK (247 aa)) form an AF2; mediates transcriptional activation region. Residue Arg756 coordinates progesterone.

Belongs to the nuclear hormone receptor family. NR3 subfamily. As to quaternary structure, interacts with SMARD1 and UNC45A. Interacts with CUEDC2; the interaction promotes ubiquitination, decreases sumoylation, and represses transcriptional activity. Interacts with PIAS3; the interaction promotes sumoylation of PR in a hormone-dependent manner, inhibits DNA-binding, and alters nuclear export. Interacts with SP1; the interaction requires ligand-induced phosphorylation on Ser-344. Interacts with PRMT2. Isoform A interacts with NCOR2. Isoform B (but not isoform A) interacts with NCOA2 and NCOA1. Isoform B (but not isoform A) interacts with KLF9. Interacts with GTF2B. Post-translationally, phosphorylated on multiple serine sites. Several of these sites are hormone-dependent. Phosphorylation on Ser-293 is highly hormone-dependent and modulates ubiquitination and sumoylation on Lys-387. Phosphorylation on Ser-344 also requires induction by hormone. Basal phosphorylation on Ser-82, Ser-190 and Ser-399 is increased in response to progesterone and can be phosphorylated in vitro by the CDK2-A1 complex. Increased levels of phosphorylation on Ser-399 also in the presence of EGF, heregulin, IGF, PMA and FBS. Phosphorylation at this site by CDK2 is ligand-independent, and increases nuclear translocation and transcriptional activity. Phosphorylation at Ser-293, but not at Ser-190, is impaired during the G(2)/M phase of the cell cycle. Phosphorylation on Ser-344 by ERK1/2 MAPK is required for interaction with SP1. Sumoylation is hormone-dependent and represses transcriptional activity. Sumoylation on all three sites is enhanced by PIAS3. Desumoylated by SENP1. Sumoylation on Lys-387, the main site of sumoylation, is repressed by ubiquitination on the same site, and modulated by phosphorylation at Ser-293. In terms of processing, ubiquitination is hormone-dependent and represses sumoylation on the same site. Promoted by MAPK-mediated phosphorylation on Ser-293. Ubiquitinated by UBR5, leading to its degradation: UBR5 specifically recognizes and binds ligand-bound PGR when it is not associated with coactivators (NCOAs). In presence of NCOAs, the UBR5-degron is not accessible, preventing its ubiquitination and degradation. Post-translationally, palmitoylated by ZDHHC7 and ZDHHC21. Palmitoylation is required for plasma membrane targeting and for rapid intracellular signaling via ERK and AKT kinases and cAMP generation. In terms of tissue distribution, isoform A and isoform B are expressed in the pituitary.

The protein localises to the nucleus. It is found in the cytoplasm. In terms of biological role, the steroid hormones and their receptors are involved in the regulation of eukaryotic gene expression and affect cellular proliferation and differentiation in target tissues. Depending on the isoform, progesterone receptor functions as a transcriptional activator or repressor. Ligand-dependent transdominant repressor of steroid hormone receptor transcriptional activity including repression of its isoform B, MR and ER. Transrepressional activity may involve recruitment of corepressor NCOR2. Its function is as follows. Transcriptional activator of several progesteron-dependent promoters in a variety of cell types. Involved in activation of SRC-dependent MAPK signaling on hormone stimulation. The sequence is that of Progesterone receptor (Pgr) from Rattus norvegicus (Rat).